The following is a 398-amino-acid chain: Acetate kinase (398 aa).

Asparagine 9 is a Mg(2+) binding site. Lysine 16 contributes to the ATP binding site. Residue arginine 90 coordinates substrate. Aspartate 147 serves as the catalytic Proton donor/acceptor. Residues histidine 207–glycine 211, aspartate 282–arginine 284, and glycine 330–asparagine 334 contribute to the ATP site. Glutamate 384 provides a ligand contact to Mg(2+).

It belongs to the acetokinase family. As to quaternary structure, homodimer. The cofactor is Mg(2+). Requires Mn(2+) as cofactor.

The protein localises to the cytoplasm. It carries out the reaction acetate + ATP = acetyl phosphate + ADP. The protein operates within metabolic intermediate biosynthesis; acetyl-CoA biosynthesis; acetyl-CoA from acetate: step 1/2. In terms of biological role, catalyzes the formation of acetyl phosphate from acetate and ATP. Can also catalyze the reverse reaction. This chain is Acetate kinase, found in Staphylococcus haemolyticus (strain JCSC1435).